Consider the following 198-residue polypeptide: Ribonuclease HII (198 aa).

Positions 1–198 (MLCGIDEAGR…QRRSFFVKNL (198 aa)) constitute an RNase H type-2 domain. 3 residues coordinate a divalent metal cation: D6, E7, and D112.

Belongs to the RNase HII family. Requires Mn(2+) as cofactor. Mg(2+) is required as a cofactor.

The protein resides in the cytoplasm. It carries out the reaction Endonucleolytic cleavage to 5'-phosphomonoester.. Its function is as follows. Endonuclease that specifically degrades the RNA of RNA-DNA hybrids. The sequence is that of Ribonuclease HII from Treponema denticola (strain ATCC 35405 / DSM 14222 / CIP 103919 / JCM 8153 / KCTC 15104).